Consider the following 206-residue polypeptide: Protein GrpE (206 aa).

The span at 1 to 15 (MTDSNGQKDNNQDQA) shows a compositional bias: polar residues. The disordered stretch occupies residues 1–38 (MTDSNGQKDNNQDQAQPADPVVSKPYIMPDDPEEGTNE).

Belongs to the GrpE family. As to quaternary structure, homodimer.

Its subcellular location is the cytoplasm. Participates actively in the response to hyperosmotic and heat shock by preventing the aggregation of stress-denatured proteins, in association with DnaK and GrpE. It is the nucleotide exchange factor for DnaK and may function as a thermosensor. Unfolded proteins bind initially to DnaJ; upon interaction with the DnaJ-bound protein, DnaK hydrolyzes its bound ATP, resulting in the formation of a stable complex. GrpE releases ADP from DnaK; ATP binding to DnaK triggers the release of the substrate protein, thus completing the reaction cycle. Several rounds of ATP-dependent interactions between DnaJ, DnaK and GrpE are required for fully efficient folding. The chain is Protein GrpE from Rhodopseudomonas palustris (strain BisB5).